The following is a 194-amino-acid chain: Imidazoleglycerol-phosphate dehydratase (194 aa).

Belongs to the imidazoleglycerol-phosphate dehydratase family.

It is found in the cytoplasm. It catalyses the reaction D-erythro-1-(imidazol-4-yl)glycerol 3-phosphate = 3-(imidazol-4-yl)-2-oxopropyl phosphate + H2O. The protein operates within amino-acid biosynthesis; L-histidine biosynthesis; L-histidine from 5-phospho-alpha-D-ribose 1-diphosphate: step 6/9. The polypeptide is Imidazoleglycerol-phosphate dehydratase (Clostridium kluyveri (strain NBRC 12016)).